The primary structure comprises 458 residues: Biphenyl dioxygenase subunit alpha (458 aa).

One can recognise a Rieske domain in the interval 58 to 156 (WLLLGHESHV…KEGDCGFDKA (99 aa)). [2Fe-2S] cluster is bound by residues Cys-100, His-102, Cys-120, and His-123. Fe cation is bound by residues His-233 and His-239.

It belongs to the bacterial ring-hydroxylating dioxygenase alpha subunit family. Heterohexamer consisting of three BphA subunits and three BphE subunits. A ferredoxin (BphF) and a ferredoxin reductase (BphG) must be present to obtain activity. It depends on [2Fe-2S] cluster as a cofactor. Fe cation serves as cofactor.

The enzyme catalyses biphenyl + NADH + O2 + H(+) = (2R,3S)-3-phenylcyclohexa-3,5-diene-1,2-diol + NAD(+). It functions in the pathway xenobiotic degradation; biphenyl degradation; 2-hydroxy-2,4-pentadienoate and benzoate from biphenyl: step 1/4. In Metapseudomonas furukawaii (Pseudomonas furukawaii), this protein is Biphenyl dioxygenase subunit alpha (bphA).